The chain runs to 149 residues: MMAFEQIPKKDWYSILGADPSASVSDLKQKYQKLILMYHPDKQSADAPAGSVEECIQKFIEIDQAWKILGNEETKKEYDLQRHEDDLRNMGPVDARIYLEEMSWNEDDHSFSLSCRCGGKYSVSKDEAEEVTLISCDTCSLIIELLHYC.

The J domain maps to 11-82; the sequence is DWYSILGADP…ETKKEYDLQR (72 aa). Residues 93–148 form the DPH-type MB domain; that stretch reads VDARIYLEEMSWNEDDHSFSLSCRCGGKYSVSKDEAEEVTLISCDTCSLIIELLHY. Residues Cys115, Cys117, Cys136, and Cys139 each coordinate Zn(2+).

It belongs to the DPH4 family. In terms of assembly, monomer and homooligomer. Iron binding promotes oligomerization.

It localises to the cytoplasm. It is found in the cytoskeleton. It functions in the pathway protein modification; peptidyl-diphthamide biosynthesis. Stimulates the ATPase activity of several Hsp70-type chaperones. This ability is enhanced by iron-binding. The iron-bound form is redox-active and can function as electron carrier. Plays a role in the diphthamide biosynthesis, a post-translational modification of histidine which occurs in translation elongation factor 2 (EEF2). The protein is DnaJ homolog subfamily C member 24 (DNAJC24) of Bos taurus (Bovine).